Consider the following 200-residue polypeptide: Lipopolysaccharide core heptose(II)-phosphate phosphatase (200 aa).

The signal sequence occupies residues 1–25 (MLAFCRSSLKSKKYFIILLALAAIA).

It belongs to the phosphoglycerate mutase family. Ais subfamily.

Its subcellular location is the periplasm. Its pathway is bacterial outer membrane biogenesis; lipopolysaccharide metabolism. Catalyzes the dephosphorylation of heptose(II) of the outer membrane lipopolysaccharide core. This is Lipopolysaccharide core heptose(II)-phosphate phosphatase from Escherichia coli (strain SE11).